Consider the following 542-residue polypeptide: Chitinase 1 (542 aa).

Residues 68–506 (FNVLCYFTDW…NAAHEGLKRR (439 aa)) enclose the GH18 domain. Residues 186 to 187 (QE) and 213 to 216 (GGWS) each bind chitin. The Proton donor role is filled by glutamate 256. Residues tyrosine 257, 323–326 (MTYD), and tryptophan 486 contribute to the chitin site.

The protein belongs to the glycosyl hydrolase 18 family. As to quaternary structure, semipurified toxin complex consists of at least YenA1-YenA2-YenB-YenC1-YenC2-Chi1-Chi2. The Yen-TC:K9 subcomplex is about 26 nm tall and 22 nm in diameter with 5-fold symmetry and 5 copies of YenA1, YenA2, Chi1 and Chi2; the chitinase subunits may be solvent accessible on the exterior the complex. The Yen-TC:K9 subcomplex has no insecticidal activity. The native complex with additional YenB, YenC1 and YenC2 subunits is 16 nm taller and is insecticidal; the toxicity-conferring subunits are present at about 1 copy each.

It localises to the secreted. It carries out the reaction Random endo-hydrolysis of N-acetyl-beta-D-glucosaminide (1-&gt;4)-beta-linkages in chitin and chitodextrins.. Its activity is regulated as follows. Toxin complex is secreted when grown at 25 degrees Celsius or less; at higher temperatures the proteins are present intracellularly but not secreted. In terms of biological role, part of an orally active toxin complex (TC) with strong insecticidal effects on larvae of the Coleoptera Costelytra zealandica, Acrossidius tasmania and Adoryphorus couloni and some Lepidoptera larvae. The TC has an endochitinase activity. This subunit might aid infection by degradation of the larval peritrophic membrane. The sequence is that of Chitinase 1 from Yersinia entomophaga.